We begin with the raw amino-acid sequence, 792 residues long: E3 UFM1-protein ligase 1 (792 aa).

Ala-2 carries the post-translational modification N-acetylalanine. Positions 2 to 200 (ADAWEEIRRL…RGLFSAITRP (199 aa)) are mediates interaction with DDRGK1. Residues 2-212 (ADAWEEIRRL…VNSLISRYGF (211 aa)) are required for E3 UFM1-protein ligase activity. The segment at 121 to 250 (DRLAEEVNDK…KAVFIPDIYS (130 aa)) is involved in CDK5RAP3-binding. Residues 200 to 400 (PTAVNSLISR…NPVHLITEED (201 aa)) are mediates interaction with TRIP4. The disordered stretch occupies residues 412–471 (TSKKDKKDERRRKATEGSGSVRGGGGSNAREYKIKKTKKKGRKDDDSDDESSHTGKKKPE). At Arg-433 the chain carries Omega-N-methylarginine. Positions 453–471 (RKDDDSDDESSHTGKKKPE) are enriched in basic and acidic residues. Position 458 is a phosphoserine (Ser-458). The segment at 488–682 (LQDAPEEFIS…QLKVTEDPAL (195 aa)) is mediates interaction with CDK5RAP3. Phosphothreonine is present on Thr-534. The residue at position 752 (Ser-752) is a Phosphoserine.

It belongs to the UFL1 family. In terms of assembly, catalytic component of the UFM1 ribosome E3 ligase (UREL) complex, composed of UFL1, DDRGK1 and CDK5RAP3. Interacts with E2-like enzyme UFC1. Interacts with RELA. Interacts with NBN; promoting recruitment to double-strand breaks following DNA damage. Interacts (when phosphorylated) with YWHAG/14-3-3-gamma; sequestering UFL1 and preventing its association with PDCD1/PD-1 substrate. In terms of processing, ubiquitinated, leading to its degradation by the proteasome. Interaction with CDK5RAP3 protects both proteins against ubiquitination and degradation via the proteasome. Phosphorylation at Thr-534 by AMPK promotes its interaction with YWHAG/14-3-3-gamma, thereby preventing UFL1 association with PDCD1/PD-1 substrate.

The protein resides in the endoplasmic reticulum membrane. Its subcellular location is the cytoplasm. It is found in the cytosol. It localises to the nucleus. The protein localises to the chromosome. E3 protein ligase that mediates ufmylation, the covalent attachment of the ubiquitin-like modifier UFM1 to lysine residues on target proteins, and which plays a key role in various processes, such as ribosome recycling, response to DNA damage, interferon response or reticulophagy (also called ER-phagy). Catalyzes ufmylation of many protein, such as CD274/PD-L1, CDK5RAP3, CYB5R3, DDRGK1, EIF6, histone H4, MRE11, P4HB, PDCD1/PD-1, TRIP4, RPN1, RPS20/uS10, RPL10/uL16, RPL26/uL24, SYVN1/HRD1 and TP53/p53. As part of the UREL complex, plays a key role in ribosome recycling by catalyzing mono-ufmylation of RPL26/uL24 subunit of the 60S ribosome. Ufmylation of RPL26/uL24 occurs on free 60S ribosomes following ribosome dissociation: it weakens the junction between post-termination 60S subunits and SEC61 translocons, promoting release and recycling of the large ribosomal subunit from the endoplasmic reticulum membrane. Ufmylation of RPL26/uL24 and subsequent 60S ribosome recycling either take place after normal termination of translation or after ribosome stalling during cotranslational translocation at the endoplasmic reticulum. Involved in reticulophagy in response to endoplasmic reticulum stress by mediating ufmylation of proteins such as CYB5R3 and RPN1, thereby promoting lysosomal degradation of ufmylated proteins. Ufmylation in response to endoplasmic reticulum stress is essential for processes such as hematopoiesis, blood vessel morphogenesis or inflammatory response. Regulates inflammation in response to endoplasmic reticulum stress by promoting reticulophagy, leading to inhibit the activity of the NF-kappa-B transcription factor. Mediates ufmylation of DDRGK1 and CDK5RAP3; the role of these modifications is however unclear: as both DDRGK1 and CDK5RAP3 act as substrate adapters for ufmylation, it is uncertain whether ufmylation of these proteins is, a collateral effect or is required for ufmylation. Acts as a negative regulator of T-cell activation by mediating ufmylation and stabilization of PDCD1/PD-1. Also involved in the response to DNA damage: recruited to double-strand break sites following DNA damage and mediates monoufmylation of histone H4 and ufmylation of MRE11. Mediates ufmylation of TP53/p53, promoting its stability. Catalyzes ufmylation of TRIP4, thereby playing a role in nuclear receptor-mediated transcription. Required for hematopoietic stem cell function and hematopoiesis. This is E3 UFM1-protein ligase 1 from Bos taurus (Bovine).